Consider the following 112-residue polypeptide: Colipase (112 aa).

Residues 1 to 17 form the signal peptide; it reads MEKILILLLVALSVAYA. Residues 18–22 constitute a propeptide, enterostatin, activation peptide; sequence APGPR. Cystine bridges form between Cys-34–Cys-45, Cys-40–Cys-56, Cys-44–Cys-78, Cys-66–Cys-86, and Cys-80–Cys-104.

Belongs to the colipase family. In terms of assembly, forms a 1:1 stoichiometric complex with pancreatic lipase. In terms of tissue distribution, expressed by the pancreas.

The protein localises to the secreted. Functionally, colipase is a cofactor of pancreatic lipase. It allows the lipase to anchor itself to the lipid-water interface. Without colipase the enzyme is washed off by bile salts, which have an inhibitory effect on the lipase. In terms of biological role, enterostatin has a biological activity as a satiety signal. In Homo sapiens (Human), this protein is Colipase.